We begin with the raw amino-acid sequence, 220 residues long: Type-4 uracil-DNA glycosylase (220 aa).

Positions 14 and 17 each coordinate [4Fe-4S] cluster. Uracil contacts are provided by residues 41–43 (GEA), Phe55, and Asn82. 2 residues coordinate [4Fe-4S] cluster: Cys86 and Cys102. His164 serves as a coordination point for uracil.

The protein belongs to the uracil-DNA glycosylase (UDG) superfamily. Type 4 (UDGa) family.

The enzyme catalyses Hydrolyzes single-stranded DNA or mismatched double-stranded DNA and polynucleotides, releasing free uracil.. Its function is as follows. Removes uracil bases that are present in DNA as a result of either deamination of cytosine or misincorporation of dUMP instead of dTMP. This chain is Type-4 uracil-DNA glycosylase, found in Sulfurisphaera tokodaii (strain DSM 16993 / JCM 10545 / NBRC 100140 / 7) (Sulfolobus tokodaii).